A 626-amino-acid polypeptide reads, in one-letter code: Putative L-type lectin-domain containing receptor kinase V.8 (626 aa).

Positions 1–21 are cleaved as a signal peptide; that stretch reads MPSELKVLHIVLVLLYTLSSS. The segment at 22-212 is legume-lectin like; sequence TYNSNGNWTL…SIGAFHYMLS (191 aa). The Extracellular portion of the chain corresponds to 22 to 245; it reads TYNSNGNWTL…PKKSSDRTKK (224 aa). N-linked (GlcNAc...) asparagine glycosylation is found at asparagine 28, asparagine 59, asparagine 112, and asparagine 162. A helical transmembrane segment spans residues 246–266; that stretch reads ILAVCLTLAVFAVFVASGICF. The Cytoplasmic segment spans residues 267–626; the sequence is VFYTRHKKVK…LTNSFLSHGR (360 aa). One can recognise a Protein kinase domain in the interval 303–562; the sequence is FKEKQLLGKG…GLLCAHHTEL (260 aa). ATP-binding positions include 309–317 and lysine 332; that span reads LGKGGFGQV. Catalysis depends on aspartate 429, which acts as the Proton acceptor.

In the C-terminal section; belongs to the protein kinase superfamily. Ser/Thr protein kinase family. This sequence in the N-terminal section; belongs to the leguminous lectin family.

The protein localises to the cell membrane. The catalysed reaction is L-seryl-[protein] + ATP = O-phospho-L-seryl-[protein] + ADP + H(+). The enzyme catalyses L-threonyl-[protein] + ATP = O-phospho-L-threonyl-[protein] + ADP + H(+). The polypeptide is Putative L-type lectin-domain containing receptor kinase V.8 (LECRK58) (Arabidopsis thaliana (Mouse-ear cress)).